The primary structure comprises 2325 residues: Protein Ycf2 (2325 aa).

3 disordered regions span residues 168 to 189, 221 to 251, and 947 to 1006; these read SSQLKGSSDQSRDHFDSIGTED, TEIESDRFSKGLSGSSSKSRLFTEGEKEMNN, and KRKK…KRKE. The span at 230–240 shows a compositional bias: low complexity; it reads KGLSGSSSKSR. Composition is skewed to basic and acidic residues over residues 241–250 and 955–1004; these read LFTEGEKEMN and KRKE…PEKR. 1436–1443 provides a ligand contact to ATP; the sequence is GSIGSGRS. Disordered stretches follow at residues 1510-1529, 1855-1996, and 2063-2179; these read YEDRDSDDYDEPGASDDYEP, LVGS…LLRP, and PAEE…DGFS. The segment covering 1861–1976 has biased composition (acidic residues); sequence TEEEVEGTEE…VEGTEDEEGE (116 aa). Residues 1977-1989 are compositionally biased toward basic and acidic residues; the sequence is GTEKDSSQFDNDR. 2 stretches are compositionally biased toward acidic residues: residues 2063–2080 and 2087–2162; these read PAEEIPEEEDPLPEEALE and GEEE…ENDS.

This sequence belongs to the Ycf2 family.

The protein resides in the plastid. It is found in the chloroplast stroma. Probable ATPase of unknown function. Its presence in a non-photosynthetic plant (Epifagus virginiana) and experiments in tobacco indicate that it has an essential function which is probably not related to photosynthesis. This is Protein Ycf2 from Oenothera biennis (German evening primrose).